Here is a 407-residue protein sequence, read N- to C-terminus: Prolyl hydroxylase EGLN2 (407 aa).

Low complexity-rich tracts occupy residues 1–24 (MDSP…SSEP) and 57–75 (ASAG…TASP). 3 disordered regions span residues 1–34 (MDSP…RARM), 50–89 (CPGV…GELR), and 108–157 (AAQG…CSSG). A Bipartite nuclear localization signal motif is present at residues 89–134 (RPLQSEGAAALVTKGCQRLAAQGARPEAPKRKWAEDGGDAPSPSKR). Ser130 is subject to Phosphoserine. Residues 225–235 (VSQRAIPPRSI) are beta(2)beta(3) 'finger-like' loop. One can recognise a Fe2OG dioxygenase domain in the interval 278–376 (GRTKAMVACY…RYAITVWYFD (99 aa)). Residues His297, Asp299, and His358 each coordinate Fe cation. Arg367 is a 2-oxoglutarate binding site.

Interacts (preferably isoform p40) with SIAH2; the interaction targets both SIAH2 isoforms for proteasomal degradation in vitro. Interacts with LIMD1, WTIP and AJUBA. Fe(2+) is required as a cofactor. L-ascorbate serves as cofactor. Ubiquitinated by SIAH1 and/or SIAH2 in response to the unfolded protein response (UPR), leading to its degradation. In terms of tissue distribution, expressed in adult and fetal heart, brain, liver, lung, skeletal muscle, and kidney. Also expressed in testis and placenta. Highest levels in adult brain, placenta, lung, kidney, and testis. Expressed in hormone responsive tissues, including normal and cancerous mammary, ovarian and prostate epithelium.

It localises to the nucleus. It carries out the reaction L-prolyl-[protein] + 2-oxoglutarate + O2 = trans-4-hydroxy-L-prolyl-[protein] + succinate + CO2. It catalyses the reaction L-prolyl-[hypoxia-inducible factor alpha subunit] + 2-oxoglutarate + O2 = trans-4-hydroxy-L-prolyl-[hypoxia-inducible factor alpha subunit] + succinate + CO2. Prolyl hydroxylase that mediates hydroxylation of proline residues in target proteins, such as ATF4, IKBKB, CEP192 and HIF1A. Target proteins are preferentially recognized via a LXXLAP motif. Cellular oxygen sensor that catalyzes, under normoxic conditions, the post-translational formation of 4-hydroxyproline in hypoxia-inducible factor (HIF) alpha proteins. Hydroxylates a specific proline found in each of the oxygen-dependent degradation (ODD) domains (N-terminal, NODD, and C-terminal, CODD) of HIF1A. Also hydroxylates HIF2A. Has a preference for the CODD site for both HIF1A and HIF2A. Hydroxylated HIFs are then targeted for proteasomal degradation via the von Hippel-Lindau ubiquitination complex. Under hypoxic conditions, the hydroxylation reaction is attenuated allowing HIFs to escape degradation resulting in their translocation to the nucleus, heterodimerization with HIF1B, and increased expression of hypoxy-inducible genes. EGLN2 is involved in regulating hypoxia tolerance and apoptosis in cardiac and skeletal muscle. Also regulates susceptibility to normoxic oxidative neuronal death. Links oxygen sensing to cell cycle and primary cilia formation by hydroxylating the critical centrosome component CEP192 which promotes its ubiquitination and subsequent proteasomal degradation. Hydroxylates IKBKB, mediating NF-kappa-B activation in hypoxic conditions. Also mediates hydroxylation of ATF4, leading to decreased protein stability of ATF4. The protein is Prolyl hydroxylase EGLN2 of Homo sapiens (Human).